A 439-amino-acid chain; its full sequence is 23S rRNA (uracil(1939)-C(5))-methyltransferase RlmD (439 aa).

The region spanning 10-68 (KSTQPQRIEFTVDSLDHHCVGIGRHQGKAIFIEGALPGEQVKARILDDKKQYAHAALQQ) is the TRAM domain. Residues cysteine 81, cysteine 87, cysteine 90, and cysteine 169 each contribute to the [4Fe-4S] cluster site. The S-adenosyl-L-methionine site is built by glutamine 273, phenylalanine 302, asparagine 307, glutamate 323, aspartate 350, and aspartate 371. The active-site Nucleophile is cysteine 397.

This sequence belongs to the class I-like SAM-binding methyltransferase superfamily. RNA M5U methyltransferase family. RlmD subfamily.

It carries out the reaction uridine(1939) in 23S rRNA + S-adenosyl-L-methionine = 5-methyluridine(1939) in 23S rRNA + S-adenosyl-L-homocysteine + H(+). Catalyzes the formation of 5-methyl-uridine at position 1939 (m5U1939) in 23S rRNA. The protein is 23S rRNA (uracil(1939)-C(5))-methyltransferase RlmD of Aeromonas salmonicida (strain A449).